The primary structure comprises 266 residues: Apolipoprotein A-I (266 aa).

Positions 1 to 18 (MKAVVLTLAVLFLTGSQA) are cleaved as a signal peptide. Tandem repeats lie at residues 67–88 (LKLL…EQIG) and 89–110 (PVTQ…QEMS). The interval 67 to 266 (LKLLDNWDSL…DEAAKKLNTQ (200 aa)) is 10 X approximate tandem repeats. Position 109 is a methionine sulfoxide (Met-109). Residues 111 to 121 (KDLEEVKQKVQ) form a 3; half-length repeat. 5 repeat units span residues 122–143 (PYLD…QKVA), 144–165 (PLGT…EKLT), 166–187 (PLGE…AHLA), 188–209 (PYSD…EGGS), and 210–231 (ASLA…EKAK). The 9; half-length repeat unit spans residues 232 to 242 (PALEDLRQGLL). Repeat 10 spans residues 243–266 (PVLESFKVSLLAAVDEAAKKLNTQ).

It belongs to the apolipoprotein A1/A4/E family. As to quaternary structure, homodimer. Interacts with APOA1BP and CLU. Component of a sperm activating protein complex (SPAP), consisting of APOA1, an immunoglobulin heavy chain, an immunoglobulin light chain and albumin. Interacts with NDRG1. Interacts with SCGB3A2. Interacts with NAXE and YJEFN3. In terms of processing, glycosylated. Post-translationally, palmitoylated. Phosphorylation sites are present in the extracellular medium.

The protein localises to the secreted. In terms of biological role, participates in the reverse transport of cholesterol from tissues to the liver for excretion by promoting cholesterol efflux from tissues and by acting as a cofactor for the lecithin cholesterol acyltransferase (LCAT). As part of the SPAP complex, activates spermatozoa motility. In Mustela putorius furo (European domestic ferret), this protein is Apolipoprotein A-I (APOA1).